Reading from the N-terminus, the 78-residue chain is ATP synthase subunit c (78 aa).

2 consecutive transmembrane segments (helical) span residues 11–31 (FIGA…VGHV) and 53–73 (LFIG…VALL).

The protein belongs to the ATPase C chain family. F-type ATPases have 2 components, F(1) - the catalytic core - and F(0) - the membrane proton channel. F(1) has five subunits: alpha(3), beta(3), gamma(1), delta(1), epsilon(1). F(0) has four main subunits: a(1), b(1), b'(1) and c(10-14). The alpha and beta chains form an alternating ring which encloses part of the gamma chain. F(1) is attached to F(0) by a central stalk formed by the gamma and epsilon chains, while a peripheral stalk is formed by the delta, b and b' chains.

The protein resides in the cell inner membrane. F(1)F(0) ATP synthase produces ATP from ADP in the presence of a proton or sodium gradient. F-type ATPases consist of two structural domains, F(1) containing the extramembraneous catalytic core and F(0) containing the membrane proton channel, linked together by a central stalk and a peripheral stalk. During catalysis, ATP synthesis in the catalytic domain of F(1) is coupled via a rotary mechanism of the central stalk subunits to proton translocation. Its function is as follows. Key component of the F(0) channel; it plays a direct role in translocation across the membrane. A homomeric c-ring of between 10-14 subunits forms the central stalk rotor element with the F(1) delta and epsilon subunits. This chain is ATP synthase subunit c, found in Jannaschia sp. (strain CCS1).